The following is a 75-amino-acid chain: Psi-conotoxin PIIIE (75 aa).

The N-terminal stretch at 1-19 is a signal peptide; the sequence is MSKLGALLTICLLLFPITA. Positions 20–50 are excised as a propeptide; it reads LLMDGDQPADRPAERMDYDISSEVHRLLERR. 4-hydroxyproline occurs at positions 52, 53, and 64. 3 cysteine pairs are disulfide-bonded: C54-C66, C55-C71, and C60-C72. G74 bears the Glycine amide mark.

In terms of tissue distribution, expressed by the venom duct.

It is found in the secreted. Its function is as follows. Psi-conotoxins act on postsynaptic membranes, and act as non-competitive antagonist of nicotinic acetylcholine receptors (nAChR). Is more toxic than Psi-conotoxin PIIIF. In vivo, has paralytic activity when injected intraperitoneally into goldfish. The sequence is that of Psi-conotoxin PIIIE from Conus purpurascens (Purple cone).